The chain runs to 231 residues: MINKTYESIASAVEGITDGSTIMVGGFGTAGMPSELIDGLIATGARDLTIISNNAGNGEIGLAALLMAGSVRKVVCSFPRQSDSYVFDELYRAGKIELEVVPQGNLAERIAAAGSGIGAFFSPTGYGTLLAEGKETREIDGRMYVLEMPLHADFALIKAHKGDRWGNLTYRKAARNFGPIMAMAAKTAIAQVDQVVELGELDPEHIITPGIFVQRVVAVSGAAASSIAKAI.

25–31 contacts CoA; the sequence is GGFGTAG.

This sequence belongs to the 3-oxoacid CoA-transferase subunit A family. As to quaternary structure, heterodimer.

The catalysed reaction is 3-oxoadipate + succinyl-CoA = 3-oxoadipyl-CoA + succinate. It functions in the pathway aromatic compound metabolism; beta-ketoadipate pathway; acetyl-CoA and succinyl-CoA from 3-oxoadipate: step 1/2. This Pseudomonas putida (Arthrobacter siderocapsulatus) protein is 3-oxoadipate CoA-transferase subunit A (pcaI).